The sequence spans 367 residues: Heme A synthase (367 aa).

A run of 5 helical transmembrane segments spans residues 25–45 (ALRF…LVGG), 111–131 (LIAR…WLTG), 139–159 (WPLV…WWMV), 174–194 (LATH…IMRG), and 210–230 (GFAA…ALVA). H274 serves as a coordination point for heme. 3 consecutive transmembrane segments (helical) span residues 276-296 (IGAY…LRAA), 305-325 (AILL…TLLM), and 327-347 (VPLH…GFAV). H335 lines the heme pocket.

Belongs to the COX15/CtaA family. Type 2 subfamily. As to quaternary structure, interacts with CtaB. It depends on heme b as a cofactor.

It is found in the cell membrane. It catalyses the reaction Fe(II)-heme o + 2 A + H2O = Fe(II)-heme a + 2 AH2. It participates in porphyrin-containing compound metabolism; heme A biosynthesis; heme A from heme O: step 1/1. Functionally, catalyzes the conversion of heme O to heme A by two successive hydroxylations of the methyl group at C8. The first hydroxylation forms heme I, the second hydroxylation results in an unstable dihydroxymethyl group, which spontaneously dehydrates, resulting in the formyl group of heme A. The polypeptide is Heme A synthase (Rhizobium johnstonii (strain DSM 114642 / LMG 32736 / 3841) (Rhizobium leguminosarum bv. viciae)).